The sequence spans 451 residues: Tubulin alpha chain (451 aa).

Residue glutamine 11 participates in GTP binding. Lysine 40 is modified (N6-acetyllysine). Positions 71, 144, 145, 179, 206, and 228 each coordinate GTP. Glutamate 71 contributes to the Mg(2+) binding site. Glutamate 254 is an active-site residue.

Belongs to the tubulin family. As to quaternary structure, dimer of alpha and beta chains. A typical microtubule is a hollow water-filled tube with an outer diameter of 25 nm and an inner diameter of 15 nM. Alpha-beta heterodimers associate head-to-tail to form protofilaments running lengthwise along the microtubule wall with the beta-tubulin subunit facing the microtubule plus end conferring a structural polarity. Microtubules usually have 13 protofilaments but different protofilament numbers can be found in some organisms and specialized cells. Mg(2+) serves as cofactor. Post-translationally, undergoes a tyrosination/detyrosination cycle, the cyclic removal and re-addition of a C-terminal tyrosine residue by the enzymes tubulin tyrosine carboxypeptidase (TTCP) and tubulin tyrosine ligase (TTL), respectively. Acetylation of alpha chains at Lys-40 stabilizes microtubules and affects affinity and processivity of microtubule motors. This modification has a role in multiple cellular functions, ranging from cell motility, cell cycle progression or cell differentiation to intracellular trafficking and signaling.

The protein localises to the cytoplasm. It is found in the cytoskeleton. It carries out the reaction GTP + H2O = GDP + phosphate + H(+). Tubulin is the major constituent of microtubules, a cylinder consisting of laterally associated linear protofilaments composed of alpha- and beta-tubulin heterodimers. Microtubules grow by the addition of GTP-tubulin dimers to the microtubule end, where a stabilizing cap forms. Below the cap, tubulin dimers are in GDP-bound state, owing to GTPase activity of alpha-tubulin. This is Tubulin alpha chain from Trypanosoma cruzi.